The primary structure comprises 638 residues: Chaperone protein DnaK (638 aa).

The residue at position 197 (Thr-197) is a Phosphothreonine; by autocatalysis. The interval 600–638 (SGAQGGAQAGPGAGAGQQANQGSSNNKEDIQDADFEEVK) is disordered. The segment covering 602–614 (AQGGAQAGPGAGA) has biased composition (gly residues). Over residues 615–624 (GQQANQGSSN) the composition is skewed to low complexity. Over residues 625 to 638 (NKEDIQDADFEEVK) the composition is skewed to basic and acidic residues.

It belongs to the heat shock protein 70 family.

Acts as a chaperone. The protein is Chaperone protein DnaK of Phocaeicola vulgatus (strain ATCC 8482 / DSM 1447 / JCM 5826 / CCUG 4940 / NBRC 14291 / NCTC 11154) (Bacteroides vulgatus).